The primary structure comprises 24 residues: DQAAGVAAIIEIDNIFSESEVISK.

The protein is Unknown protein 6 of Lonomia obliqua (Moth).